The following is a 370-amino-acid chain: ATP synthase gamma chain, chloroplastic (370 aa).

A chloroplast-targeting transit peptide spans 1-55; sequence MKFFCVAGLLASAAAFQAQPAAFTTYSPAVGGATSNVFSESSSPAHRNRRATIVM. Cysteine 145 is an active-site residue.

It belongs to the ATPase gamma chain family. In terms of assembly, F-type ATPases have 2 components, CF(1) - the catalytic core - and CF(0) - the membrane proton channel. CF(1) has five subunits: alpha(3), beta(3), gamma(1), delta(1), epsilon(1). CF(0) has four main subunits: a, b, b' and c.

The protein resides in the plastid. It localises to the chloroplast thylakoid membrane. Produces ATP from ADP in the presence of a proton gradient across the membrane. The gamma chain is believed to be important in regulating ATPase activity and the flow of protons through the CF(0) complex. The protein is ATP synthase gamma chain, chloroplastic (ATPC) of Trieres chinensis (Marine centric diatom).